The chain runs to 79 residues: D-alanyl carrier protein (79 aa).

The Carrier domain maps to 1-76 (MKEQIFDIIE…KIAARVQEKT (76 aa)). Serine 34 is subject to O-(pantetheine 4'-phosphoryl)serine.

It belongs to the DltC family. In terms of processing, 4'-phosphopantetheine is transferred from CoA to a specific serine of apo-DCP.

It localises to the cytoplasm. Its pathway is cell wall biogenesis; lipoteichoic acid biosynthesis. Carrier protein involved in the D-alanylation of lipoteichoic acid (LTA). The loading of thioester-linked D-alanine onto DltC is catalyzed by D-alanine--D-alanyl carrier protein ligase DltA. The DltC-carried D-alanyl group is further transferred to cell membrane phosphatidylglycerol (PG) by forming an ester bond, probably catalyzed by DltD. D-alanylation of LTA plays an important role in modulating the properties of the cell wall in Gram-positive bacteria, influencing the net charge of the cell wall. The sequence is that of D-alanyl carrier protein from Lactococcus lactis subsp. cremoris (strain SK11).